A 526-amino-acid polypeptide reads, in one-letter code: MKYIFVTGGVMSGLGKGITAASVGRILKNRGYRVTAVKIDPYLNIDAGTMNPAQHGEVFVLKDGGEVDLDLGNYERFLDIELTSSHNITTGKVYRTVIEKERRGDFLGETVQIIPHITDQIKTCIRQAAEETFPDGTKADVCLVEVGGTVGDIESMPFLEAVRQMRGELDEHDYVLVHVTLVPEDAMGDLKTKPTQHSVKALRELGLHADIIVCRSERVVGANTKRKISAFCDLPLSAVISAATARDTYEVPMEMEKEGIADVLSTHLGLEKKETDPSWYRLVTKEYTNRVTVAIVSKYGIEDVYISIKEALKHAGRALSTEVKIVWLDAERYEPCSLKDYDGILIPGGFGKRGIEGKIGAIRFARENKVPFLGLCLGFQLATIEFARHKCGIADATSEEFGEGSHVIALLPEQESVTELGGTMRLGDYTSDIRDKTLAMKLYGKSQIIERHRHRYEVNPHYIEKLEKEGLVFSATNKNRMECLELPGHPFFFATQFHPEFKSRPTRPSPPYLGFVEACRANKRTT.

An amidoligase domain region spans residues 1–270; the sequence is MKYIFVTGGV…ADVLSTHLGL (270 aa). Ser12 is a binding site for CTP. Residue Ser12 participates in UTP binding. Residues 13–18 and Asp70 contribute to the ATP site; that span reads GLGKGI. Residues Asp70 and Glu145 each coordinate Mg(2+). Residues 152–154, 191–196, and Lys227 each bind CTP; these read DIE and KTKPTQ. UTP contacts are provided by residues 191-196 and Lys227; that span reads KTKPTQ. The 233-residue stretch at 293-525 folds into the Glutamine amidotransferase type-1 domain; the sequence is VAIVSKYGIE…VEACRANKRT (233 aa). Gly349 is a binding site for L-glutamine. Cys376 serves as the catalytic Nucleophile; for glutamine hydrolysis. Residues 377-380, Glu400, and Arg455 contribute to the L-glutamine site; that span reads LGFQ. Catalysis depends on residues His498 and Glu500.

This sequence belongs to the CTP synthase family. In terms of assembly, homotetramer.

It catalyses the reaction UTP + L-glutamine + ATP + H2O = CTP + L-glutamate + ADP + phosphate + 2 H(+). The catalysed reaction is L-glutamine + H2O = L-glutamate + NH4(+). It carries out the reaction UTP + NH4(+) + ATP = CTP + ADP + phosphate + 2 H(+). It participates in pyrimidine metabolism; CTP biosynthesis via de novo pathway; CTP from UDP: step 2/2. Its activity is regulated as follows. Allosterically activated by GTP, when glutamine is the substrate; GTP has no effect on the reaction when ammonia is the substrate. The allosteric effector GTP functions by stabilizing the protein conformation that binds the tetrahedral intermediate(s) formed during glutamine hydrolysis. Inhibited by the product CTP, via allosteric rather than competitive inhibition. In terms of biological role, catalyzes the ATP-dependent amination of UTP to CTP with either L-glutamine or ammonia as the source of nitrogen. Regulates intracellular CTP levels through interactions with the four ribonucleotide triphosphates. In Methanoregula boonei (strain DSM 21154 / JCM 14090 / 6A8), this protein is CTP synthase.